Reading from the N-terminus, the 101-residue chain is Protein Tat (101 aa).

Residues Met-1–Pro-10 show a composition bias toward basic and acidic residues. Residues Met-1 to Thr-20 are disordered. Residues Met-1–Asn-24 are interaction with human CREBBP. The tract at residues Met-1 to Gly-48 is transactivation. Residues Cys-22, Cys-25, and Cys-27 each contribute to the Zn(2+) site. Residues Cys-22 to Cys-37 are cysteine-rich. Position 28 is an N6-acetyllysine; by host PCAF (Lys-28). Positions 30, 33, 34, and 37 each coordinate Zn(2+). The interval Phe-38 to Gly-48 is core. The span at Gly-48 to Thr-58 shows a compositional bias: basic residues. A disordered region spans residues Gly-48–Asp-101. The Nuclear localization signal, RNA-binding (TAR), and protein transduction motif lies at Arg-49 to Arg-57. An interaction with the host capping enzyme RNGTT region spans residues Arg-49–Lys-86. Lys-50 and Lys-51 each carry N6-acetyllysine; by host EP300 and GCN5L2. Arg-52 carries the post-translational modification Asymmetric dimethylarginine; by host PRMT6. Over residues Lys-86–Asp-101 the composition is skewed to basic and acidic residues.

The protein belongs to the lentiviruses Tat family. Interacts with host CCNT1. Associates with the P-TEFb complex composed at least of Tat, P-TEFb (CDK9 and CCNT1), TAR RNA, RNA Pol II. Recruits the HATs CREBBP, TAF1/TFIID, EP300, PCAF and GCN5L2. Interacts with host KAT5/Tip60; this interaction targets the latter to degradation. Interacts with the host deacetylase SIRT1. Interacts with host capping enzyme RNGTT; this interaction stimulates RNGTT. Binds to host KDR, and to the host integrins ITGAV/ITGB3 and ITGA5/ITGB1. Interacts with host KPNB1/importin beta-1 without previous binding to KPNA1/importin alpha-1. Interacts with EIF2AK2. Interacts with host nucleosome assembly protein NAP1L1; this interaction may be required for the transport of Tat within the nucleus, since the two proteins interact at the nuclear rim. Interacts with host C1QBP/SF2P32; this interaction involves lysine-acetylated Tat. Interacts with the host chemokine receptors CCR2, CCR3 and CXCR4. Interacts with host DPP4/CD26; this interaction may trigger an anti-proliferative effect. Interacts with host LDLR. Interacts with the host extracellular matrix metalloproteinase MMP1. Interacts with host PRMT6; this interaction mediates Tat's methylation. Interacts with, and is ubiquitinated by MDM2/Hdm2. Interacts with host PSMC3 and HTATIP2. Interacts with STAB1; this interaction may overcome SATB1-mediated repression of IL2 and IL2RA (interleukin) in T cells by binding to the same domain than HDAC1. Interacts (when acetylated) with human CDK13, thereby increasing HIV-1 mRNA splicing and promoting the production of the doubly spliced HIV-1 protein Nef. Interacts with host TBP; this interaction modulates the activity of transcriptional pre-initiation complex. Interacts with host RELA. Interacts with host PLSCR1; this interaction negatively regulates Tat transactivation activity by altering its subcellular distribution. Asymmetrical arginine methylation by host PRMT6 seems to diminish the transactivation capacity of Tat and affects the interaction with host CCNT1. Post-translationally, acetylation by EP300, CREBBP, GCN5L2/GCN5 and PCAF regulates the transactivation activity of Tat. EP300-mediated acetylation of Lys-50 promotes dissociation of Tat from the TAR RNA through the competitive binding to PCAF's bromodomain. In addition, the non-acetylated Tat's N-terminus can also interact with PCAF. PCAF-mediated acetylation of Lys-28 enhances Tat's binding to CCNT1. Lys-50 is deacetylated by SIRT1. In terms of processing, polyubiquitination by host MDM2 does not target Tat to degradation, but activates its transactivation function and fosters interaction with CCNT1 and TAR RNA. Phosphorylated by EIF2AK2 on serine and threonine residues adjacent to the basic region important for TAR RNA binding and function. Phosphorylation of Tat by EIF2AK2 is dependent on the prior activation of EIF2AK2 by dsRNA.

It localises to the host nucleus. The protein localises to the host nucleolus. It is found in the host cytoplasm. The protein resides in the secreted. In terms of biological role, transcriptional activator that increases RNA Pol II processivity, thereby increasing the level of full-length viral transcripts. Recognizes a hairpin structure at the 5'-LTR of the nascent viral mRNAs referred to as the transactivation responsive RNA element (TAR) and recruits the cyclin T1-CDK9 complex (P-TEFb complex) that will in turn hyperphosphorylate the RNA polymerase II to allow efficient elongation. The CDK9 component of P-TEFb and other Tat-activated kinases hyperphosphorylate the C-terminus of RNA Pol II that becomes stabilized and much more processive. Other factors such as HTATSF1/Tat-SF1, SUPT5H/SPT5, and HTATIP2 are also important for Tat's function. Besides its effect on RNA Pol II processivity, Tat induces chromatin remodeling of proviral genes by recruiting the histone acetyltransferases (HATs) CREBBP, EP300 and PCAF to the chromatin. This also contributes to the increase in proviral transcription rate, especially when the provirus integrates in transcriptionally silent region of the host genome. To ensure maximal activation of the LTR, Tat mediates nuclear translocation of NF-kappa-B by interacting with host RELA. Through its interaction with host TBP, Tat may also modulate transcription initiation. Tat can reactivate a latently infected cell by penetrating in it and transactivating its LTR promoter. In the cytoplasm, Tat is thought to act as a translational activator of HIV-1 mRNAs. Functionally, extracellular circulating Tat can be endocytosed by surrounding uninfected cells via the binding to several surface receptors such as CD26, CXCR4, heparan sulfate proteoglycans (HSPG) or LDLR. Neurons are rarely infected, but they internalize Tat via their LDLR. Through its interaction with nuclear HATs, Tat is potentially able to control the acetylation-dependent cellular gene expression. Modulates the expression of many cellular genes involved in cell survival, proliferation or in coding for cytokines or cytokine receptors. Tat plays a role in T-cell and neurons apoptosis. Tat induced neurotoxicity and apoptosis probably contribute to neuroAIDS. Circulating Tat also acts as a chemokine-like and/or growth factor-like molecule that binds to specific receptors on the surface of the cells, affecting many cellular pathways. In the vascular system, Tat binds to ITGAV/ITGB3 and ITGA5/ITGB1 integrins dimers at the surface of endothelial cells and competes with bFGF for heparin-binding sites, leading to an excess of soluble bFGF. The protein is Protein Tat of Homo sapiens (Human).